Here is a 195-residue protein sequence, read N- to C-terminus: Glycerol-3-phosphate acyltransferase (195 aa).

A run of 5 helical transmembrane segments spans residues 3–23, 51–71, 79–99, 111–131, and 153–173; these read EAAL…YFFT, GVAL…AWIG, LLVI…FLGF, IILF…LAIV, and LAMG…ALVV.

Belongs to the PlsY family. Probably interacts with PlsX.

Its subcellular location is the cell membrane. It catalyses the reaction an acyl phosphate + sn-glycerol 3-phosphate = a 1-acyl-sn-glycero-3-phosphate + phosphate. It participates in lipid metabolism; phospholipid metabolism. Its function is as follows. Catalyzes the transfer of an acyl group from acyl-phosphate (acyl-PO(4)) to glycerol-3-phosphate (G3P) to form lysophosphatidic acid (LPA). This enzyme utilizes acyl-phosphate as fatty acyl donor, but not acyl-CoA or acyl-ACP. This Syntrophomonas wolfei subsp. wolfei (strain DSM 2245B / Goettingen) protein is Glycerol-3-phosphate acyltransferase.